Consider the following 103-residue polypeptide: Putative membrane protein insertion efficiency factor (103 aa).

Belongs to the UPF0161 family.

The protein resides in the cell inner membrane. Functionally, could be involved in insertion of integral membrane proteins into the membrane. The protein is Putative membrane protein insertion efficiency factor of Chlamydia felis (strain Fe/C-56) (Chlamydophila felis).